The chain runs to 244 residues: Rho-related GTP-binding protein RhoE (244 aa).

GTP is bound at residue glycine 30–threonine 37. The Effector region signature appears at tyrosine 52 to tyrosine 60. Residues aspartate 77–serine 81 and cysteine 135–aspartate 138 each bind GTP. Cysteine 241 bears the Cysteine methyl ester mark. Cysteine 241 carries the S-farnesyl cysteine lipid modification. Residues threonine 242–methionine 244 constitute a propeptide, removed in mature form.

The protein belongs to the small GTPase superfamily. Rho family. In terms of assembly, binds ROCK1. Interacts with UBXD5. As to expression, ubiquitous.

Its subcellular location is the golgi apparatus membrane. Functionally, binds GTP but lacks intrinsic GTPase activity and is resistant to Rho-specific GTPase-activating proteins. The sequence is that of Rho-related GTP-binding protein RhoE (RND3) from Homo sapiens (Human).